A 208-amino-acid polypeptide reads, in one-letter code: High frequency lysogenization protein HflD homolog (208 aa).

The protein belongs to the HflD family.

The protein localises to the cytoplasm. It is found in the cell inner membrane. The polypeptide is High frequency lysogenization protein HflD homolog (Pseudomonas putida (strain ATCC 700007 / DSM 6899 / JCM 31910 / BCRC 17059 / LMG 24140 / F1)).